The primary structure comprises 288 residues: MAVVTMKQLLDSGTHFGHQTRRWNPKMKRFIFTDRNGIYIIDLQQTLTYIDKAYEFVKETVAHGGTVLFVGTKKQAQESIAAEATRVGMPYVNQRWLGGMLTNFTTVHKRLLRLKELEAMEQTGGFEGRTKKEILMLTREMTKLDRTLGGIRDMAKVPSAVWVVDTNKEHLAVAEARKLNIPVIAILDTNCDPDLVDYPIPGNDDAIRSAALLTKVVASAVAEGVQARAGLSSDKDAKPEAGAGEPLAEWEQELLSQAAPAAEAAPAAEAQAAPAAEAPAAEAPSTEA.

A disordered region spans residues 228-288; that stretch reads RAGLSSDKDA…PAAEAPSTEA (61 aa). The span at 257 to 288 shows a compositional bias: low complexity; it reads QAAPAAEAAPAAEAQAAPAAEAPAAEAPSTEA.

This sequence belongs to the universal ribosomal protein uS2 family.

This chain is Small ribosomal subunit protein uS2, found in Rhodococcus opacus (strain B4).